The sequence spans 668 residues: UvrABC system protein B (668 aa).

One can recognise a Helicase ATP-binding domain in the interval 31 to 416 (QGITDGVPAQ…RGHIIEQIIR (386 aa)). 44–51 (GTTGSGKT) provides a ligand contact to ATP. Positions 97-120 (YYDYYQPEAYIARSDTYIEKSLLI) match the Beta-hairpin motif. The Helicase C-terminal domain maps to 433 to 596 (QIDDLLEEIR…ITPQPIIKPI (164 aa)). Positions 621–656 (EASIKTYEEAMYQAAQEFQFDEAVKYRDLMNAAKKQ) constitute a UVR domain.

The protein belongs to the UvrB family. As to quaternary structure, forms a heterotetramer with UvrA during the search for lesions. Interacts with UvrC in an incision complex.

The protein localises to the cytoplasm. Functionally, the UvrABC repair system catalyzes the recognition and processing of DNA lesions. A damage recognition complex composed of 2 UvrA and 2 UvrB subunits scans DNA for abnormalities. Upon binding of the UvrA(2)B(2) complex to a putative damaged site, the DNA wraps around one UvrB monomer. DNA wrap is dependent on ATP binding by UvrB and probably causes local melting of the DNA helix, facilitating insertion of UvrB beta-hairpin between the DNA strands. Then UvrB probes one DNA strand for the presence of a lesion. If a lesion is found the UvrA subunits dissociate and the UvrB-DNA preincision complex is formed. This complex is subsequently bound by UvrC and the second UvrB is released. If no lesion is found, the DNA wraps around the other UvrB subunit that will check the other stand for damage. The polypeptide is UvrABC system protein B (Chlamydia trachomatis serovar A (strain ATCC VR-571B / DSM 19440 / HAR-13)).